The sequence spans 130 residues: Small ribosomal subunit protein uS9 (130 aa).

The protein belongs to the universal ribosomal protein uS9 family.

The sequence is that of Small ribosomal subunit protein uS9 from Sodalis glossinidius (strain morsitans).